The following is a 237-amino-acid chain: MRSGVIAQKLGMTRVYNDAGEHVPVTVLRMENCHVVAQRTVEKNGYTAVQLGVGVAKVKNTSKAMRGHFAKAEVEPKAKLAEFRVSPDNLLEVGVEITAEHFVAGQKVDVTGTSIGKGFAGVMKRHNFGGHRASHGNSITHRSHGSTGQRQDPGKVFKGKKMAGHMGQTRVTTQNIEVVSTDSDRGLILVRGAVPGSKGAWILVRDAVKASLPENAPKPAGLRAGAKAEAAATEGAE.

Disordered regions lie at residues Ala133–Lys155 and Pro213–Glu237. A compositionally biased stretch (polar residues) spans His135–Arg150. Gln151 is modified (N5-methylglutamine). Residues Ala220–Glu237 show a composition bias toward low complexity.

It belongs to the universal ribosomal protein uL3 family. As to quaternary structure, part of the 50S ribosomal subunit. Forms a cluster with proteins L14 and L19. Post-translationally, methylated by PrmB.

In terms of biological role, one of the primary rRNA binding proteins, it binds directly near the 3'-end of the 23S rRNA, where it nucleates assembly of the 50S subunit. This Brucella suis biovar 1 (strain 1330) protein is Large ribosomal subunit protein uL3.